The following is a 720-amino-acid chain: Serine/threonine-protein kinase KIN82 (720 aa).

Polar residues-rich tracts occupy residues 1–13 (MTQQ…SQRL) and 99–116 (FNHN…STSE). Disordered stretches follow at residues 1-20 (MTQQ…RSMS) and 99-128 (FNHN…RSTI). Serine 203 is modified (phosphoserine). Residues 230 to 241 (SPLANLSLSNSP) show a composition bias toward low complexity. A disordered region spans residues 230–257 (SPLANLSLSNSPIDSPRKNSETRKDQIP). Positions 244–255 (SPRKNSETRKDQ) are enriched in basic and acidic residues. One can recognise a Protein kinase domain in the interval 324-602 (FEKIRLLGQG…AADIKRHPFF (279 aa)). Residues 330-338 (LGQGDVGKV) and lysine 353 each bind ATP. Aspartate 449 functions as the Proton acceptor in the catalytic mechanism.

Belongs to the protein kinase superfamily. Ser/Thr protein kinase family. KIN82 subfamily.

It carries out the reaction L-seryl-[protein] + ATP = O-phospho-L-seryl-[protein] + ADP + H(+). The catalysed reaction is L-threonyl-[protein] + ATP = O-phospho-L-threonyl-[protein] + ADP + H(+). Functionally, flippase activator that phosphorylates DFN1 and DFN2 and which is involved in the generation of phospholipid asymmetry in membranes by the inward translocation of phospholipids. The protein is Serine/threonine-protein kinase KIN82 (KIN82) of Saccharomyces cerevisiae (strain ATCC 204508 / S288c) (Baker's yeast).